A 1790-amino-acid polypeptide reads, in one-letter code: Protein FAM186A (1790 aa).

The protein belongs to the FAM186 family.

The polypeptide is Protein FAM186A (FAM186A) (Mus musculus (Mouse)).